The sequence spans 416 residues: Pectin acetylesterase 10 (416 aa).

The first 20 residues, 1–20 (MRKLFLLGFIVAGLVLGNEA), serve as a signal peptide directing secretion. An N-linked (GlcNAc...) asparagine glycan is attached at Asn-27. Active-site charge relay system residues include Ser-198, Asp-294, and His-361.

It belongs to the pectinacetylesterase family.

Its subcellular location is the secreted. It is found in the cell wall. Its function is as follows. Hydrolyzes acetyl esters in homogalacturonan regions of pectin. In type I primary cell wall, galacturonic acid residues of pectin can be acetylated at the O-2 and O-3 positions. Decreasing the degree of acetylation of pectin gels in vitro alters their physical properties. In Arabidopsis thaliana (Mouse-ear cress), this protein is Pectin acetylesterase 10.